Here is a 700-residue protein sequence, read N- to C-terminus: Polyribonucleotide nucleotidyltransferase (700 aa).

The Mg(2+) site is built by Asp485 and Asp491. Residues 552-611 (PRITVIKINPEKIRDVIGKGGAVIRALTEETGTTIELEDDGTVKIASSNGEATKEAIRRI) form the KH domain. The 69-residue stretch at 621–689 (GRIYNGKVIR…RQGRVRLSIK (69 aa)) folds into the S1 motif domain.

This sequence belongs to the polyribonucleotide nucleotidyltransferase family. As to quaternary structure, component of the RNA degradosome, which is a multiprotein complex involved in RNA processing and mRNA degradation. Requires Mg(2+) as cofactor.

The protein localises to the cytoplasm. It carries out the reaction RNA(n+1) + phosphate = RNA(n) + a ribonucleoside 5'-diphosphate. Its function is as follows. Involved in mRNA degradation. Catalyzes the phosphorolysis of single-stranded polyribonucleotides processively in the 3'- to 5'-direction. In Shewanella baltica (strain OS155 / ATCC BAA-1091), this protein is Polyribonucleotide nucleotidyltransferase.